Here is a 173-residue protein sequence, read N- to C-terminus: HAM34 protein (173 aa).

Residues 22 to 89 show a composition bias toward low complexity; that stretch reads AAPATTPDTA…ADGTQTATAP (68 aa). Residues 22-155 form a disordered region; it reads AAPATTPDTA…ATDTTSGASH (134 aa). The span at 95–133 shows a compositional bias: polar residues; that stretch reads TEESSASGEMTPTVGTDTSDQVSDSTAAGPSTPEGSMTG. The segment covering 134-155 has biased composition (low complexity); it reads TSTPKASDSSSSATDTTSGASH.

In terms of tissue distribution, germinating spores.

Its function is as follows. Could be a structural protein required for the infection process of B.lactucae. The chain is HAM34 protein (HAM34) from Bremia lactucae (Lettuce downy mildew).